The primary structure comprises 131 residues: Snaclec alboaggregin-A subunit alpha (131 aa).

Positions 1-131 (DCPSDWSSYD…EYPFVCKFXR (131 aa)) constitute a C-type lectin domain. 3 disulfides stabilise this stretch: Cys2–Cys13, Cys30–Cys127, and Cys102–Cys119.

Belongs to the snaclec family. In terms of assembly, heterotetramer of the subunits alpha, alpha', beta and beta'; disulfide-linked. As to expression, expressed by the venom gland.

It is found in the secreted. Potent platelet activator that aggregates platelets via both GPIbalpha (GP1BA) and GPVI (GP6). Induces a tyrosine phosphorylation profile in platelets that resembles this produced by collagen, involving the time dependent tyrosine phosphorylation of Fc receptor gamma chain (FCGR1A), phospholipase Cgamma2 (PLCG2), and LAT. The chain is Snaclec alboaggregin-A subunit alpha from Trimeresurus albolabris (White-lipped pit viper).